We begin with the raw amino-acid sequence, 276 residues long: NAD kinase (276 aa).

The active-site Proton acceptor is the Asp-61. Residues 61-62 (DG), Arg-66, 135-136 (NE), Arg-146, His-163, Asp-165, and Ala-200 each bind NAD(+).

Belongs to the NAD kinase family. A divalent metal cation is required as a cofactor.

The protein localises to the cytoplasm. It carries out the reaction NAD(+) + ATP = ADP + NADP(+) + H(+). Its function is as follows. Involved in the regulation of the intracellular balance of NAD and NADP, and is a key enzyme in the biosynthesis of NADP. Catalyzes specifically the phosphorylation on 2'-hydroxyl of the adenosine moiety of NAD to yield NADP. This Chloroflexus aggregans (strain MD-66 / DSM 9485) protein is NAD kinase.